The following is a 388-amino-acid chain: Na(+)/H(+) antiporter NhaA (388 aa).

The next 12 helical transmembrane spans lie at 14 to 34 (TIGI…NSPL), 59 to 79 (LLLW…GLEI), 95 to 115 (TFPA…FASL), 125 to 145 (GWAI…SLLG), 154 to 174 (VFLM…IALF), 177 to 197 (TKLS…LFIM), 200 to 220 (MCVI…VSVL), 222 to 242 (SGVH…YRIN), 257 to 277 (GLHL…NAGV), 295 to 315 (IMLG…YLAV), 328 to 348 (LIQF…SLFI), and 362 to 382 (ADKL…YIVL).

This sequence belongs to the NhaA Na(+)/H(+) (TC 2.A.33) antiporter family.

It localises to the cell inner membrane. The enzyme catalyses Na(+)(in) + 2 H(+)(out) = Na(+)(out) + 2 H(+)(in). Functionally, na(+)/H(+) antiporter that extrudes sodium in exchange for external protons. This Nitratiruptor sp. (strain SB155-2) protein is Na(+)/H(+) antiporter NhaA.